Here is a 376-residue protein sequence, read N- to C-terminus: DNA double-strand break repair protein Mre11 (376 aa).

Mn(2+) is bound by residues Asp5, His7, Asp46, and Asp81. His82 serves as the catalytic Proton donor. Mn(2+) contacts are provided by His159, His189, and His191.

Belongs to the MRE11/RAD32 family. In terms of assembly, homodimer. Forms a heterotetramer composed of two Mre11 subunits and two Rad50 subunits. The cofactor is Mn(2+).

Its activity is regulated as follows. Nuclease activity is regulated by Rad50. In terms of biological role, part of the Rad50/Mre11 complex, which is involved in the early steps of DNA double-strand break (DSB) repair. The complex may facilitate opening of the processed DNA ends to aid in the recruitment of HerA and NurA. Mre11 binds to DSB ends and has both double-stranded 3'-5' exonuclease activity and single-stranded endonuclease activity. The polypeptide is DNA double-strand break repair protein Mre11 (Thermoplasma acidophilum (strain ATCC 25905 / DSM 1728 / JCM 9062 / NBRC 15155 / AMRC-C165)).